The chain runs to 396 residues: Elongation factor Tu (396 aa).

The region spanning 10 to 205 (KPHVNIGTIG…ACDDNIPDPV (196 aa)) is the tr-type G domain. Residues 19 to 26 (GHVDHGKT) form a G1 region. GTP is bound at residue 19–26 (GHVDHGKT). Thr-26 lines the Mg(2+) pocket. The G2 stretch occupies residues 62-66 (GITIN). Positions 83 to 86 (DAPG) are G3. GTP is bound by residues 83–87 (DAPGH) and 138–141 (NKCD). The tract at residues 138-141 (NKCD) is G4. The G5 stretch occupies residues 175 to 177 (SAL).

It belongs to the TRAFAC class translation factor GTPase superfamily. Classic translation factor GTPase family. EF-Tu/EF-1A subfamily. Monomer.

The protein resides in the cytoplasm. It carries out the reaction GTP + H2O = GDP + phosphate + H(+). GTP hydrolase that promotes the GTP-dependent binding of aminoacyl-tRNA to the A-site of ribosomes during protein biosynthesis. The protein is Elongation factor Tu of Corynebacterium efficiens (strain DSM 44549 / YS-314 / AJ 12310 / JCM 11189 / NBRC 100395).